The sequence spans 336 residues: Cytoskeleton protein RodZ (336 aa).

Over methionine 1 to glycine 111 the chain is Cytoplasmic. An HTH cro/C1-type domain is found at leucine 19–leucine 71. The H-T-H motif DNA-binding region spans glutamine 30–glutamate 49. Residues tryptophan 112 to tryptophan 132 traverse the membrane as a helical; Signal-anchor for type II membrane protein segment. Residues tryptophan 133 to glutamine 336 are Periplasmic-facing. Residues asparagine 155–glycine 243 form a disordered region. Polar residues predominate over residues glycine 161–aspartate 175. Composition is skewed to low complexity over residues threonine 176–proline 214 and threonine 221–glycine 243.

The protein belongs to the RodZ family.

Its subcellular location is the cell inner membrane. Cytoskeletal protein that is involved in cell-shape control through regulation of the length of the long axis. The sequence is that of Cytoskeleton protein RodZ from Salmonella newport (strain SL254).